Reading from the N-terminus, the 310-residue chain is Ribose-phosphate pyrophosphokinase (310 aa).

ATP is bound by residues 34-36 and 93-94; these read DQE and RQ. The Mg(2+) site is built by histidine 127 and aspartate 167. Lysine 190 is a catalytic residue. D-ribose 5-phosphate is bound by residues arginine 192, aspartate 216, and 220–224; that span reads DSGGT.

The protein belongs to the ribose-phosphate pyrophosphokinase family. Class I subfamily. In terms of assembly, homohexamer. Mg(2+) serves as cofactor.

It is found in the cytoplasm. The catalysed reaction is D-ribose 5-phosphate + ATP = 5-phospho-alpha-D-ribose 1-diphosphate + AMP + H(+). It participates in metabolic intermediate biosynthesis; 5-phospho-alpha-D-ribose 1-diphosphate biosynthesis; 5-phospho-alpha-D-ribose 1-diphosphate from D-ribose 5-phosphate (route I): step 1/1. Functionally, involved in the biosynthesis of the central metabolite phospho-alpha-D-ribosyl-1-pyrophosphate (PRPP) via the transfer of pyrophosphoryl group from ATP to 1-hydroxyl of ribose-5-phosphate (Rib-5-P). The protein is Ribose-phosphate pyrophosphokinase of Brucella melitensis biotype 1 (strain ATCC 23456 / CCUG 17765 / NCTC 10094 / 16M).